The following is a 249-amino-acid chain: MITWLDPQDPFPPVERALGPASDAPGLLAASRDLSPQRLLLAYRQGIFPWYSEGQPVLWWSTDPRMVLAPHRLKISVSLRKTLRRILRDPDWEIRVDDDFVAVMQACAMTPRDGQLGTWITDDIVAAYGSLHRLGLAHSVETWYRGERVGGLYGVALGRMFYGESMFAHRTDASKIALAALCGFLERHGVTMIDCQQETDHLASLGAEPIPREQFIAHVRQTAAEANISPWRFDKSELTRWTSQASTEL.

It belongs to the L/F-transferase family.

Its subcellular location is the cytoplasm. It catalyses the reaction N-terminal L-lysyl-[protein] + L-leucyl-tRNA(Leu) = N-terminal L-leucyl-L-lysyl-[protein] + tRNA(Leu) + H(+). The enzyme catalyses N-terminal L-arginyl-[protein] + L-leucyl-tRNA(Leu) = N-terminal L-leucyl-L-arginyl-[protein] + tRNA(Leu) + H(+). It carries out the reaction L-phenylalanyl-tRNA(Phe) + an N-terminal L-alpha-aminoacyl-[protein] = an N-terminal L-phenylalanyl-L-alpha-aminoacyl-[protein] + tRNA(Phe). Its function is as follows. Functions in the N-end rule pathway of protein degradation where it conjugates Leu, Phe and, less efficiently, Met from aminoacyl-tRNAs to the N-termini of proteins containing an N-terminal arginine or lysine. The sequence is that of Leucyl/phenylalanyl-tRNA--protein transferase from Cupriavidus metallidurans (strain ATCC 43123 / DSM 2839 / NBRC 102507 / CH34) (Ralstonia metallidurans).